The primary structure comprises 142 residues: 3-hydroxyacyl-[acyl-carrier-protein] dehydratase FabZ (142 aa).

H49 is a catalytic residue.

The protein belongs to the thioester dehydratase family. FabZ subfamily.

It is found in the cytoplasm. It carries out the reaction a (3R)-hydroxyacyl-[ACP] = a (2E)-enoyl-[ACP] + H2O. Involved in unsaturated fatty acids biosynthesis. Catalyzes the dehydration of short chain beta-hydroxyacyl-ACPs and long chain saturated and unsaturated beta-hydroxyacyl-ACPs. In Clostridium novyi (strain NT), this protein is 3-hydroxyacyl-[acyl-carrier-protein] dehydratase FabZ.